The following is a 146-amino-acid chain: Putative pre-16S rRNA nuclease (146 aa).

The protein belongs to the YqgF nuclease family.

It localises to the cytoplasm. In terms of biological role, could be a nuclease involved in processing of the 5'-end of pre-16S rRNA. In Dechloromonas aromatica (strain RCB), this protein is Putative pre-16S rRNA nuclease.